Consider the following 281-residue polypeptide: Probable protein phosphatase 2C 9 (281 aa).

The 248-residue stretch at 33-280 (KYGFSLVKGK…DDISCVVVRF (248 aa)) folds into the PPM-type phosphatase domain. Mn(2+)-binding residues include D70, G71, D232, and D271.

It belongs to the PP2C family. Interacts with phytochromes (via N-terminus). The cofactor is Mg(2+). Mn(2+) is required as a cofactor.

The protein localises to the nucleus. The enzyme catalyses O-phospho-L-seryl-[protein] + H2O = L-seryl-[protein] + phosphate. It carries out the reaction O-phospho-L-threonyl-[protein] + H2O = L-threonyl-[protein] + phosphate. Its function is as follows. Involved in the regulation of phytochrome signaling. May regulate phytochrome-interacting factor 3 (PIF3) through the dephosphorylation of phytochrome. This is Probable protein phosphatase 2C 9 from Arabidopsis thaliana (Mouse-ear cress).